Here is an 820-residue protein sequence, read N- to C-terminus: MGNLEANDVGNNSRKYNHPFEPYDIQIQLMDAIYDAIDNYKIGLFESPTGTGKTLSLICSSMTWLREYKKNSTFRETEDSESEDEPEWVKQAYQKTIANRTKVRAQEYERLLDDLSENYDVSKVSVLPEKKVKRQKPEQEQDENFIPADYYSDSELDSKYENDKLTSEINELLSRVDGPKETVEPVNDCPVKIFFSSRTHSQLSQFSHQLNMTEFESSLDNIPERIKFSPLASRKQLCIHPKISKLSNVSSINDACIDLQQSSKNSCEYIPKLHNTQSEEIVKKFSDLSFTKIHDIEDLGKLGNKLKICPYYSVRKGIDVTEIIALPYQMLLQDSTRSALNLNIDDSIIIIDEAHNLLDVISSIYSVSITSNELSDITKSLKFYLNKFIKRLNSGNRINIMKLIKLCQVLEKFISSNSKDGKIKHGDEIITSDIFEGTTGDLVNIHKIEQFLNKSKIAYKIESYMQKLNDSESIKNRSNPLLFKITKFLKCLTNPSKEGKFFWDKTNDSVSINYMLLDPSEIFRDIVKRARCVLLCGGTMEPMNDYTNYLFPYIPPEQIKKFSCGHIIPQENLEVFPIGNYNDISFEFSFDKRNNSKMIIELGHAILNIIESTPDGIVIFFPSYKYLNVVMNVWRQNKIIESLTKVKAIFQEPEDSSKVEKVLNDYSSTNKSEKHSALLLSVVGGKMSEGINFSDELARGVIMIGLPFPNIFSAELIAKRKFIEESTIAKGGTKSQAMVNAKNFYENICMRAVNQSIGRSIRHKNDYSIIYLFDQRYGSDKIQDKLSGWVKQKLFTRGRCTDFNQVIKETQDFFRQKLLG.

Positions 12–410 (NSRKYNHPFE…MKLIKLCQVL (399 aa)) constitute a Helicase ATP-binding domain. 47 to 54 (SPTGTGKT) is an ATP binding site. The [4Fe-4S] cluster site is built by C238, C256, C267, and C309. The DEAH box signature appears at 352–355 (DEAH).

The protein belongs to the DEAD box helicase family. DEAH subfamily. DDX11/CHL1 sub-subfamily. It depends on [4Fe-4S] cluster as a cofactor.

It is found in the nucleus. It carries out the reaction Couples ATP hydrolysis with the unwinding of duplex DNA at the replication fork by translocating in the 5'-3' direction. This creates two antiparallel DNA single strands (ssDNA). The leading ssDNA polymer is the template for DNA polymerase III holoenzyme which synthesizes a continuous strand.. The enzyme catalyses ATP + H2O = ADP + phosphate + H(+). Functionally, ATP-dependent DNA helicase important for chromosome transmission and normal cell cycle progression in G(2)/M. May have a role in changing DNA topology to allow the loading of proteins involved in maintaining sister chromatid cohesion in the vicinity of the centromeres. Has a specific role in chromosome segregation during meiosis II. The polypeptide is ATP-dependent DNA helicase CHL1 (CHL1) (Debaryomyces hansenii (strain ATCC 36239 / CBS 767 / BCRC 21394 / JCM 1990 / NBRC 0083 / IGC 2968) (Yeast)).